Reading from the N-terminus, the 440-residue chain is Serine hydroxymethyltransferase (440 aa).

Residues Leu-119 and 123 to 125 (GHL) each bind (6S)-5,6,7,8-tetrahydrofolate. Lys-228 carries the N6-(pyridoxal phosphate)lysine modification. 370–372 (SPF) is a (6S)-5,6,7,8-tetrahydrofolate binding site.

It belongs to the SHMT family. In terms of assembly, homodimer. Pyridoxal 5'-phosphate is required as a cofactor.

It is found in the cytoplasm. It carries out the reaction (6R)-5,10-methylene-5,6,7,8-tetrahydrofolate + glycine + H2O = (6S)-5,6,7,8-tetrahydrofolate + L-serine. Its pathway is one-carbon metabolism; tetrahydrofolate interconversion. It participates in amino-acid biosynthesis; glycine biosynthesis; glycine from L-serine: step 1/1. Catalyzes the reversible interconversion of serine and glycine with tetrahydrofolate (THF) serving as the one-carbon carrier. This reaction serves as the major source of one-carbon groups required for the biosynthesis of purines, thymidylate, methionine, and other important biomolecules. Also exhibits THF-independent aldolase activity toward beta-hydroxyamino acids, producing glycine and aldehydes, via a retro-aldol mechanism. This Chlorobium luteolum (strain DSM 273 / BCRC 81028 / 2530) (Pelodictyon luteolum) protein is Serine hydroxymethyltransferase.